We begin with the raw amino-acid sequence, 558 residues long: Aurovertin biosynthesis cluster transcription factor aurF (558 aa).

The protein belongs to the POU transcription factor family. Class-3 subfamily.

It localises to the nucleus. Its function is as follows. Transcription factor that regulates the expression of the gene cluster that mediates the biosynthesis of aurovertins, fungal polyketides that exhibit potent inhibition of adenosine triphosphate synthase. This Calcarisporium arbuscula (Dendryphion arbuscula) protein is Aurovertin biosynthesis cluster transcription factor aurF.